A 157-amino-acid chain; its full sequence is Crossover junction endodeoxyribonuclease RuvC (157 aa).

Catalysis depends on residues D7, E66, and D139. Mg(2+) is bound by residues D7, E66, and D139.

The protein belongs to the RuvC family. Homodimer which binds Holliday junction (HJ) DNA. The HJ becomes 2-fold symmetrical on binding to RuvC with unstacked arms; it has a different conformation from HJ DNA in complex with RuvA. In the full resolvosome a probable DNA-RuvA(4)-RuvB(12)-RuvC(2) complex forms which resolves the HJ. The cofactor is Mg(2+).

It localises to the cytoplasm. It catalyses the reaction Endonucleolytic cleavage at a junction such as a reciprocal single-stranded crossover between two homologous DNA duplexes (Holliday junction).. Functionally, the RuvA-RuvB-RuvC complex processes Holliday junction (HJ) DNA during genetic recombination and DNA repair. Endonuclease that resolves HJ intermediates. Cleaves cruciform DNA by making single-stranded nicks across the HJ at symmetrical positions within the homologous arms, yielding a 5'-phosphate and a 3'-hydroxyl group; requires a central core of homology in the junction. The consensus cleavage sequence is 5'-(A/T)TT(C/G)-3'. Cleavage occurs on the 3'-side of the TT dinucleotide at the point of strand exchange. HJ branch migration catalyzed by RuvA-RuvB allows RuvC to scan DNA until it finds its consensus sequence, where it cleaves and resolves the cruciform DNA. This is Crossover junction endodeoxyribonuclease RuvC from Campylobacter curvus (strain 525.92).